Reading from the N-terminus, the 291-residue chain is ATP synthase gamma chain (291 aa).

Belongs to the ATPase gamma chain family. In terms of assembly, F-type ATPases have 2 components, CF(1) - the catalytic core - and CF(0) - the membrane proton channel. CF(1) has five subunits: alpha(3), beta(3), gamma(1), delta(1), epsilon(1). CF(0) has three main subunits: a, b and c.

It localises to the cell membrane. Produces ATP from ADP in the presence of a proton gradient across the membrane. The gamma chain is believed to be important in regulating ATPase activity and the flow of protons through the CF(0) complex. This Streptococcus uberis (strain ATCC BAA-854 / 0140J) protein is ATP synthase gamma chain.